The chain runs to 397 residues: MRLTLPRLNAAYIVGAARTPVGKFNGALKSVSAIDLGITAAKAAVQRSKVPADQIDEFLFGQVLTANSGQAPARQVVIKGGFPESVEATTINKVCSSGLKTVALAAQAIKAGDRNVIVAGGMESMSNTPYYSGRGLVFGNQKLEDSIVKDGLWDPYNNIHMGNCCENTNKRDGITREQQDEYAIESYRRANESIKNGAFKDEIVPVEIKTRKGTVTVSEDEEPKGANAEKLKGLKPVFDKQGSVTAGNASPINDGASAVVVASGTKAKELGTPVLAKIVSYADAATAPIDFTIAPSLAIPAALKKAGLTKDDIALWEINEAFSGVALANLMRLGIDKSKVNVKGGAVALGHPIGASGNRIFVTLVNALKEGEYGVAAICNGGGASTAIVIKKVSSVE.

Residue Cys95 is the Acyl-thioester intermediate of the active site. 2 residues coordinate CoA: Tyr187 and Lys230. Residue Tyr187 participates in K(+) binding. K(+) contacts are provided by Ala246, Gly247, and Ala249. Ser250 lines the CoA pocket. Residue Val347 coordinates K(+). Residues His351 and Cys379 each act as proton acceptor in the active site.

This sequence belongs to the thiolase-like superfamily. Thiolase family.

The protein localises to the peroxisome. The enzyme catalyses 2 acetyl-CoA = acetoacetyl-CoA + CoA. Essential for n-decane utilization. This chain is Acetyl-CoA acetyltransferase (PAT1), found in Yarrowia lipolytica (strain CLIB 122 / E 150) (Yeast).